The chain runs to 498 residues: ATP synthase subunit beta, chloroplastic (498 aa).

172-179 (GGAGVGKT) is a binding site for ATP.

It belongs to the ATPase alpha/beta chains family. F-type ATPases have 2 components, CF(1) - the catalytic core - and CF(0) - the membrane proton channel. CF(1) has five subunits: alpha(3), beta(3), gamma(1), delta(1), epsilon(1). CF(0) has four main subunits: a(1), b(1), b'(1) and c(9-12).

The protein resides in the plastid. It localises to the chloroplast thylakoid membrane. It carries out the reaction ATP + H2O + 4 H(+)(in) = ADP + phosphate + 5 H(+)(out). In terms of biological role, produces ATP from ADP in the presence of a proton gradient across the membrane. The catalytic sites are hosted primarily by the beta subunits. The sequence is that of ATP synthase subunit beta, chloroplastic from Castanea sativa (Sweet chestnut).